The following is a 282-amino-acid chain: B3 domain-containing protein At5g06250 (282 aa).

The TF-B3 DNA-binding region spans 46–159 (FEKSLTPSDV…RLFIGWRRRG (114 aa)).

It localises to the nucleus. This chain is B3 domain-containing protein At5g06250, found in Arabidopsis thaliana (Mouse-ear cress).